The sequence spans 278 residues: Bifunctional protein FolD (278 aa).

NADP(+) contacts are provided by residues 163-165, Ser188, and Val229; that span reads GRS.

This sequence belongs to the tetrahydrofolate dehydrogenase/cyclohydrolase family. Homodimer.

The catalysed reaction is (6R)-5,10-methylene-5,6,7,8-tetrahydrofolate + NADP(+) = (6R)-5,10-methenyltetrahydrofolate + NADPH. It catalyses the reaction (6R)-5,10-methenyltetrahydrofolate + H2O = (6R)-10-formyltetrahydrofolate + H(+). It participates in one-carbon metabolism; tetrahydrofolate interconversion. Its function is as follows. Catalyzes the oxidation of 5,10-methylenetetrahydrofolate to 5,10-methenyltetrahydrofolate and then the hydrolysis of 5,10-methenyltetrahydrofolate to 10-formyltetrahydrofolate. This chain is Bifunctional protein FolD, found in Exiguobacterium sp. (strain ATCC BAA-1283 / AT1b).